Consider the following 175-residue polypeptide: ATP-dependent protease subunit HslV (175 aa).

Thr-2 is a catalytic residue. Residues Ala-156, Cys-159, and Thr-162 each coordinate Na(+).

It belongs to the peptidase T1B family. HslV subfamily. A double ring-shaped homohexamer of HslV is capped on each side by a ring-shaped HslU homohexamer. The assembly of the HslU/HslV complex is dependent on binding of ATP.

It localises to the cytoplasm. It catalyses the reaction ATP-dependent cleavage of peptide bonds with broad specificity.. With respect to regulation, allosterically activated by HslU binding. Functionally, protease subunit of a proteasome-like degradation complex believed to be a general protein degrading machinery. The sequence is that of ATP-dependent protease subunit HslV from Rhizobium etli (strain ATCC 51251 / DSM 11541 / JCM 21823 / NBRC 15573 / CFN 42).